The following is a 763-amino-acid chain: Formin-like protein 4 (763 aa).

Positions 1–33 are cleaved as a signal peptide; it reads MAAMLMQPWPPFLPHLTLVFLTLILFFPNQSFS. Residues 52-73 are disordered; that stretch reads PPVQSPVLSPPQNPSSSSSDSD. Residues 80–100 traverse the membrane as a helical segment; it reads AVLITAASTLLVAAVFFFLVH. Disordered stretches follow at residues 185–327 and 726–763; these read IYSK…DSDH and RSSM…DSDM. Polar residues predominate over residues 205–225; that stretch reads RSSTSHSVIHNDNYRNATTTH. The segment covering 229–238 has biased composition (basic and acidic residues); sequence VKTDSFEFVK. A compositionally biased stretch (pro residues) spans 240–280; sequence DPTPPPPPPPPIPVKQSATPPPPPPPKLKNNGPSPPPPPPL. The segment covering 281 to 292 has biased composition (low complexity); it reads KKTAALSSSASK. In terms of domain architecture, FH2 spans 303 to 738; the sequence is SGESSNGQVK…MGSTQQRNAV (436 aa). A compositionally biased stretch (basic and acidic residues) spans 316–327; it reads LHWDKVNPDSDH. Over residues 726-736 the composition is skewed to polar residues; the sequence is RSSMGSTQQRN.

Belongs to the formin-like family. Class-I subfamily. As to quaternary structure, interacts with profilin. As to expression, expressed in the whole plant (at protein level).

Its subcellular location is the cell membrane. Might be involved in the organization and polarity of the actin cytoskeleton. This is Formin-like protein 4 (FH4) from Arabidopsis thaliana (Mouse-ear cress).